We begin with the raw amino-acid sequence, 623 residues long: MTTRTSPAPAGLLRPSLHCLAFAVALGSAGAALAKDVTWEDIANDDKTTGDVLQYGMGTHAQRWSPLKQVNADNVFKLTPAWSYSFGDEKQRGQESQAIVSDGVIYVTASYSRLFALDAKTGKRLWTYNHRLPDDIRPCCDVVNRGAAIYGDKVFFGTLDASVVALNKNTGKVVWKKKFADHGAGYTMTGAPTIVKDGKTGKVLLIHGSSGDEFGVVGRLFARDPDTGEEIWMRPFVEGHMGRLNGKDSTVTGDVKAPSWPDDRNSPTGKVESWSHGGGAPWQSASFDAETNTIIVGAGNPGPWNTWARTAKGGNPHDYDSLYTSGQVGVDPSSGEVKWFYQHTPNDAWDFSGNNELVLFDYKAKDGKIVKATAHADRNGFFYVVDRSNGKLQNAFPFVDNITWASHIDLKTGRPVEREGQRPPLPEPGQKHGKAVEVSPPFLGGKNWNPMAYSQDTGLFYVPANHWKEDYWTEEVSYTKGSAYLGMGFRIKRMYDDHVGSLRAMDPVSGKVVWEHKEHLPLWAGVLATAGNLVFTGTGDGYFKAFDAKSGKELWKFQTGSGIVSPPITWEQDGEQYLGVTVGYGGAVPLWGGDMADLTRPVAQGGSFWVFKLPSWDNRTASR.

The N-terminal stretch at 1 to 34 (MTTRTSPAPAGLLRPSLHCLAFAVALGSAGAALA) is a signal peptide. Positions 45, 48, and 51 each coordinate Ca(2+). E95 is a binding site for pyrroloquinoline quinone. C139 and C140 are oxidised to a cystine. Pyrroloquinoline quinone is bound by residues R145, T189, and 207 to 209 (HGS). Residue E213 coordinates Ca(2+). The disordered stretch occupies residues 244-281 (LNGKDSTVTGDVKAPSWPDDRNSPTGKVESWSHGGGAP). N300 and D350 together coordinate Ca(2+). D350 (proton acceptor) is an active-site residue. Residue R378 participates in pyrroloquinoline quinone binding. Positions 413 to 434 (GRPVEREGQRPPLPEPGQKHGK) are disordered. Pyrroloquinoline quinone-binding residues include W523 and A587.

The protein belongs to the bacterial PQQ dehydrogenase family. As to quaternary structure, homodimer. Interacts with cytochrome c550. It depends on pyrroloquinoline quinone as a cofactor. The cofactor is Ca(2+). In terms of processing, the disulfide ring formed between the two adjacent cysteine residues Cys-139 and Cys-140 is essential for efficient electron transfer at pH 7 from QEDH to its natural electron acceptor cytochrome c550.

It is found in the periplasm. The catalysed reaction is a primary alcohol + 2 Fe(III)-[cytochrome c] = an aldehyde + 2 Fe(II)-[cytochrome c] + 2 H(+). The enzyme catalyses ethanol + 2 Fe(III)-[cytochrome c] = acetaldehyde + 2 Fe(II)-[cytochrome c] + 2 H(+). It carries out the reaction butan-1-ol + 2 Fe(III)-[cytochrome c] = butanal + 2 Fe(II)-[cytochrome c] + 2 H(+). It catalyses the reaction propan-2-ol + 2 Fe(III)-[cytochrome c] = acetone + 2 Fe(II)-[cytochrome c] + 2 H(+). The catalysed reaction is 1-propanol + 2 Fe(III)-[cytochrome c] = propanal + 2 Fe(II)-[cytochrome c] + 2 H(+). It participates in alcohol metabolism; ethanol degradation; acetate from ethanol: step 1/2. With respect to regulation, inhibited by cyclopropanone ethylhemiketal. Activated by ammonia (500mM), methylamine (5mM), ethylamine (5mM), octylamine (5mM), ethanolamine (5mM) and 1-amino-2-propanol (5mM), in assays using artificial electron acceptors. Ammonia is not needed for, nor does it stimulate, the ethanol-oxidizing activity when using the natural electron acceptor cytochrome c550. Functionally, catalyzes the oxidation of ethanol and other primary alcohols to the corresponding aldehydes, except methanol, which is a very poor substrate. Uses a specific inducible cytochrome c550, encoded by the adjacent gene in the locus, as electron acceptor. Is a key enzyme of the carbon and energy metabolism during growth of P.aeruginosa on ethanol as the sole carbon and energy source. Is also able to use secondary alcohols as well as aminoalcohols like ethanolamine and 1-amino-2-propanol, and aldehydes as substrates. In Pseudomonas aeruginosa (strain ATCC 15692 / DSM 22644 / CIP 104116 / JCM 14847 / LMG 12228 / 1C / PRS 101 / PAO1), this protein is Quinoprotein ethanol dehydrogenase.